The following is a 122-amino-acid chain: Small ribosomal subunit protein uS8c (122 aa).

The protein belongs to the universal ribosomal protein uS8 family. As to quaternary structure, part of the 30S ribosomal subunit.

It is found in the plastid. The protein resides in the chloroplast. In terms of biological role, one of the primary rRNA binding proteins, it binds directly to 16S rRNA central domain where it helps coordinate assembly of the platform of the 30S subunit. The protein is Small ribosomal subunit protein uS8c (rps8) of Ostreococcus tauri.